We begin with the raw amino-acid sequence, 156 residues long: ATP synthase subunit b (156 aa).

Residues 7 to 29 form a helical membrane-spanning segment; that stretch reads LFAQMVVFLVLAWFTMKFVWPPL.

This sequence belongs to the ATPase B chain family. In terms of assembly, F-type ATPases have 2 components, F(1) - the catalytic core - and F(0) - the membrane proton channel. F(1) has five subunits: alpha(3), beta(3), gamma(1), delta(1), epsilon(1). F(0) has three main subunits: a(1), b(2) and c(10-14). The alpha and beta chains form an alternating ring which encloses part of the gamma chain. F(1) is attached to F(0) by a central stalk formed by the gamma and epsilon chains, while a peripheral stalk is formed by the delta and b chains.

It localises to the cell inner membrane. In terms of biological role, f(1)F(0) ATP synthase produces ATP from ADP in the presence of a proton or sodium gradient. F-type ATPases consist of two structural domains, F(1) containing the extramembraneous catalytic core and F(0) containing the membrane proton channel, linked together by a central stalk and a peripheral stalk. During catalysis, ATP synthesis in the catalytic domain of F(1) is coupled via a rotary mechanism of the central stalk subunits to proton translocation. Functionally, component of the F(0) channel, it forms part of the peripheral stalk, linking F(1) to F(0). The sequence is that of ATP synthase subunit b from Burkholderia pseudomallei (strain 668).